We begin with the raw amino-acid sequence, 606 residues long: MAQTPSSTASTEVAKYVQTQNGIPPSNPVSSAMDPYHACSILQQLKAMYDEGKLTDIVVQVDHGKHFSCHRNVLAAISPYFRSMFTSGLTESTQKEVRLVGIEAESMQLVLNYAYTSRVQLTEANVQALFTAASIFQIPSLQDQCAQYMISRLEPQNCIGVFSFADHYGHQELKEKAQDYIRKKFLYVTKEQEFLHLRKDQLISILNSDDLDVEKEEHVYDSIISWYEHEQETREMHLPEIFAKCIRMPLMEETFVEQIPPIFAQAMPINRVQKGKISANCCTRRLGMTASEMIICFEAANKHSGKKQTVPCLDTLTGKVYKLCKPPGDLREVGILVTPDNELYIAGGYRPSNNDVCIDHKAESDFWLYDHSSNRWLPKAPLLRARIGCKLVHCCGKLYAIGGRVYEGDGRNPLKSVECYDTRDNCWTAVSLMPVAMEFHSAVEYKDKIYILQGEVFLCYDPPRDYWCYLTPMTAPRVQGMAAVYKDSIYYVAGIRGNHRVLTVEAYDVEQNRWTRKKDLPCEQSSNPYIKLVVFKSKLHLFVRATQVSVEEFVFRTSRKNSLYQYDEIADSWKKVYETPERLWDLGRHFECAVAKLYPQCLQKVL.

The BTB domain occupies 55–123 (TDIVVQVDHG…AYTSRVQLTE (69 aa)). Residues 158 to 258 (CIGVFSFADH…PLMEETFVEQ (101 aa)) form the BACK domain. Kelch repeat units follow at residues 342-396 (ELYI…HCCG), 397-447 (KLYA…EYKD), 449-487 (IYIL…VYKD), 488-534 (SIYY…KLVV), and 546-593 (TQVS…FECA).

Belongs to the KBTBD8 family. As to quaternary structure, component of the BCR(KBTBD8) E3 ubiquitin ligase complex.

The protein localises to the cytoplasm. Its subcellular location is the cytoskeleton. It is found in the spindle. The protein resides in the golgi apparatus. Functionally, substrate-specific adapter of a BCR (BTB-CUL3-RBX1) E3 ubiquitin ligase complex that acts as a regulator of neural crest specification. The BCR(KBTBD8) complex acts by mediating monoubiquitination of target proteins. The chain is Kelch repeat and BTB domain-containing protein 8 (kbtbd8) from Xenopus tropicalis (Western clawed frog).